The following is a 356-amino-acid chain: UDP-N-acetylglucosamine--N-acetylmuramyl-(pentapeptide) pyrophosphoryl-undecaprenol N-acetylglucosamine transferase (356 aa).

UDP-N-acetyl-alpha-D-glucosamine is bound by residues 11–13, Asn123, Arg159, Ser187, Ile241, 260–265, and Gln286; these read TGG and ALTVAE.

The protein belongs to the glycosyltransferase 28 family. MurG subfamily.

The protein localises to the cell inner membrane. The enzyme catalyses di-trans,octa-cis-undecaprenyl diphospho-N-acetyl-alpha-D-muramoyl-L-alanyl-D-glutamyl-meso-2,6-diaminopimeloyl-D-alanyl-D-alanine + UDP-N-acetyl-alpha-D-glucosamine = di-trans,octa-cis-undecaprenyl diphospho-[N-acetyl-alpha-D-glucosaminyl-(1-&gt;4)]-N-acetyl-alpha-D-muramoyl-L-alanyl-D-glutamyl-meso-2,6-diaminopimeloyl-D-alanyl-D-alanine + UDP + H(+). It functions in the pathway cell wall biogenesis; peptidoglycan biosynthesis. Functionally, cell wall formation. Catalyzes the transfer of a GlcNAc subunit on undecaprenyl-pyrophosphoryl-MurNAc-pentapeptide (lipid intermediate I) to form undecaprenyl-pyrophosphoryl-MurNAc-(pentapeptide)GlcNAc (lipid intermediate II). This chain is UDP-N-acetylglucosamine--N-acetylmuramyl-(pentapeptide) pyrophosphoryl-undecaprenol N-acetylglucosamine transferase, found in Azoarcus sp. (strain BH72).